The primary structure comprises 767 residues: Ribonucleoside-diphosphate reductase large subunit (767 aa).

Residues threonine 176, 191–192 (SC), glycine 222, 392–396 (NLCAE), and 578–582 (PTAGT) each bind substrate. The cysteines at positions 192 and 408 are disulfide-linked. Asparagine 392 (proton acceptor) is an active-site residue. Residue cysteine 394 is the Cysteine radical intermediate of the active site. Glutamate 396 (proton acceptor) is an active-site residue.

The protein belongs to the ribonucleoside diphosphate reductase large chain family. In terms of assembly, heterotetramer composed of a homodimer of the large subunit (R1) and a homodimer of the small subunit (R2). Larger multisubunit protein complex are also active, composed of (R1)n(R2)n.

The catalysed reaction is a 2'-deoxyribonucleoside 5'-diphosphate + [thioredoxin]-disulfide + H2O = a ribonucleoside 5'-diphosphate + [thioredoxin]-dithiol. In terms of biological role, ribonucleoside-diphosphate reductase holoenzyme provides the precursors necessary for viral DNA synthesis. Allows virus growth in non-dividing cells, as well as reactivation from latency in infected hosts. Catalyzes the biosynthesis of deoxyribonucleotides from the corresponding ribonucleotides. The polypeptide is Ribonucleoside-diphosphate reductase large subunit (Saimiri sciureus (Common squirrel monkey)).